Consider the following 157-residue polypeptide: Protein Smg (157 aa).

Belongs to the Smg family.

This is Protein Smg from Buchnera aphidicola subsp. Acyrthosiphon pisum (strain 5A).